Reading from the N-terminus, the 298-residue chain is Beta-soluble NSF attachment protein (298 aa).

This sequence belongs to the SNAP family. As to quaternary structure, interacts with PRKCABP, and disrupts the interaction between GRIA2 and PRKCABP, leading to the internalization of GRIA2. As to expression, brain.

It localises to the membrane. Functionally, required for vesicular transport between the endoplasmic reticulum and the Golgi apparatus. The polypeptide is Beta-soluble NSF attachment protein (NAPB) (Bos taurus (Bovine)).